The chain runs to 338 residues: Aspartate-semialdehyde dehydrogenase (338 aa).

Residues 13–16 (SGAV) and 41–42 (RS) contribute to the NADP(+) site. A phosphate-binding site is contributed by Arg-101. Cys-132 serves as the catalytic Acyl-thioester intermediate. Gln-159 is a substrate binding site. 162-163 (SG) is a binding site for NADP(+). Lys-216 is a phosphate binding site. Residue Arg-238 participates in substrate binding. His-245 serves as the catalytic Proton acceptor. NADP(+) is bound at residue Asn-317.

The protein belongs to the aspartate-semialdehyde dehydrogenase family. As to quaternary structure, homodimer.

It catalyses the reaction L-aspartate 4-semialdehyde + phosphate + NADP(+) = 4-phospho-L-aspartate + NADPH + H(+). The protein operates within amino-acid biosynthesis; L-lysine biosynthesis via DAP pathway; (S)-tetrahydrodipicolinate from L-aspartate: step 2/4. Its pathway is amino-acid biosynthesis; L-methionine biosynthesis via de novo pathway; L-homoserine from L-aspartate: step 2/3. It participates in amino-acid biosynthesis; L-threonine biosynthesis; L-threonine from L-aspartate: step 2/5. Functionally, catalyzes the NADPH-dependent formation of L-aspartate-semialdehyde (L-ASA) by the reductive dephosphorylation of L-aspartyl-4-phosphate. This is Aspartate-semialdehyde dehydrogenase from Shewanella violacea (strain JCM 10179 / CIP 106290 / LMG 19151 / DSS12).